Reading from the N-terminus, the 276-residue chain is Phosphate import ATP-binding protein PstB (276 aa).

An ABC transporter domain is found at 23 to 271; sequence VNNKNIVYDT…PSDQRTEDYI (249 aa). 62–69 is a binding site for ATP; the sequence is GPSGCGKS.

The protein belongs to the ABC transporter superfamily. Phosphate importer (TC 3.A.1.7) family. In terms of assembly, the complex is composed of two ATP-binding proteins (PstB), two transmembrane proteins (PstC and PstA) and a solute-binding protein (PstS).

It localises to the cell membrane. It catalyses the reaction phosphate(out) + ATP + H2O = ADP + 2 phosphate(in) + H(+). Its function is as follows. Part of the ABC transporter complex PstSACB involved in phosphate import. Responsible for energy coupling to the transport system. The polypeptide is Phosphate import ATP-binding protein PstB (Oceanobacillus iheyensis (strain DSM 14371 / CIP 107618 / JCM 11309 / KCTC 3954 / HTE831)).